The following is a 409-amino-acid chain: Isovaleryl-CoA dehydrogenase, mitochondrial (409 aa).

The transit peptide at Met-1–Phe-22 directs the protein to the mitochondrion. Residues Leu-151–Ser-160 and Trp-184–Thr-186 each bind FAD. Ser-160 contacts substrate. Substrate is bound by residues Ser-206 to Lys-207, Tyr-261, and Asp-268 to Arg-271. Glu-270 (proton acceptor) is an active-site residue. Residues Arg-296, Gln-307, and Gln-364–Gly-368 each bind FAD. Ala-391–Gly-392 contributes to the substrate binding site. Thr-393 to Glu-395 is an FAD binding site.

It belongs to the acyl-CoA dehydrogenase family. As to quaternary structure, homodimer. FAD is required as a cofactor. As to expression, expressed in leaves, stems and flowers. Not detected in roots.

The protein resides in the mitochondrion. The enzyme catalyses 3-methylbutanoyl-CoA + oxidized [electron-transfer flavoprotein] + H(+) = 3-methylbut-2-enoyl-CoA + reduced [electron-transfer flavoprotein]. It functions in the pathway amino-acid degradation; L-leucine degradation; (S)-3-hydroxy-3-methylglutaryl-CoA from 3-isovaleryl-CoA: step 1/3. Involved in degradation of the branched-chain amino acids, phytol and lysine for the supply of carbon and electrons to the ETF/ETFQO complex during dark-induced sugar starvation. The chain is Isovaleryl-CoA dehydrogenase, mitochondrial (IVD) from Arabidopsis thaliana (Mouse-ear cress).